Reading from the N-terminus, the 345-residue chain is Biotin synthase (345 aa).

The Radical SAM core domain occupies 38–256 (GEVQVSTLLS…IAVARIMMPR (219 aa)). [4Fe-4S] cluster is bound by residues Cys-53, Cys-57, and Cys-60. Residues Cys-97, Cys-128, Cys-188, and Arg-260 each contribute to the [2Fe-2S] cluster site.

It belongs to the radical SAM superfamily. Biotin synthase family. As to quaternary structure, homodimer. [4Fe-4S] cluster serves as cofactor. [2Fe-2S] cluster is required as a cofactor.

The catalysed reaction is (4R,5S)-dethiobiotin + (sulfur carrier)-SH + 2 reduced [2Fe-2S]-[ferredoxin] + 2 S-adenosyl-L-methionine = (sulfur carrier)-H + biotin + 2 5'-deoxyadenosine + 2 L-methionine + 2 oxidized [2Fe-2S]-[ferredoxin]. The protein operates within cofactor biosynthesis; biotin biosynthesis; biotin from 7,8-diaminononanoate: step 2/2. Functionally, catalyzes the conversion of dethiobiotin (DTB) to biotin by the insertion of a sulfur atom into dethiobiotin via a radical-based mechanism. The polypeptide is Biotin synthase (Sodalis glossinidius (strain morsitans)).